A 456-amino-acid chain; its full sequence is N(6)-adenosine-methyltransferase non-catalytic subunit METTL14 (456 aa).

Residues D39–S51 show a composition bias toward basic and acidic residues. The segment at D39–E74 is disordered. A compositionally biased stretch (polar residues) spans R52–V61. Interaction with METTL3 regions lie at residues R135 to D136 and S237 to G238. Residues R245 to R254 form a positively charged region required for RNA-binding region. Interaction with METTL3 stretches follow at residues R255 to D258 and K278 to H287. The segment at H297–R298 is positively charged region required for RNA-binding. An interaction with METTL3 region spans residues N308–D312. The tract at residues L395–R456 is disordered. Residues A410–A421 show a composition bias toward gly residues. The span at R423 to N441 shows a compositional bias: basic and acidic residues.

The protein belongs to the MT-A70-like family. In terms of assembly, heterodimer; heterodimerizes with mettl3 to form an antiparallel heterodimer that constitutes an active methyltransferase. Component of the WMM complex, a N6-methyltransferase complex composed of a catalytic subcomplex, named MAC, and of an associated subcomplex, named MACOM. The MAC subcomplex is composed of mettl3 and mettl14.

The protein localises to the nucleus. In terms of biological role, the METTL3-METTL14 heterodimer forms a N6-methyltransferase complex that methylates adenosine residues at the N(6) position of some mRNAs and regulates the circadian clock, differentiation of embryonic stem cells and cortical neurogenesis. In the heterodimer formed with mettl3, mettl14 constitutes the RNA-binding scaffold that recognizes the substrate rather than the catalytic core. N6-methyladenosine (m6A), which takes place at the 5'-[AG]GAC-3' consensus sites of some mRNAs, plays a role in mRNA stability and processing. The sequence is that of N(6)-adenosine-methyltransferase non-catalytic subunit METTL14 (mettl14) from Xenopus tropicalis (Western clawed frog).